Consider the following 925-residue polypeptide: Protein translocase subunit SecA (925 aa).

ATP is bound by residues glutamine 87, 105-109 (GEGKT), and aspartate 512. Positions 910, 912, 921, and 922 each coordinate Zn(2+).

Belongs to the SecA family. As to quaternary structure, monomer and homodimer. Part of the essential Sec protein translocation apparatus which comprises SecA, SecYEG and auxiliary proteins SecDF-YajC and YidC. The cofactor is Zn(2+).

It localises to the cell inner membrane. The protein localises to the cytoplasm. It carries out the reaction ATP + H2O + cellular proteinSide 1 = ADP + phosphate + cellular proteinSide 2.. Its function is as follows. Part of the Sec protein translocase complex. Interacts with the SecYEG preprotein conducting channel. Has a central role in coupling the hydrolysis of ATP to the transfer of proteins into and across the cell membrane, serving both as a receptor for the preprotein-SecB complex and as an ATP-driven molecular motor driving the stepwise translocation of polypeptide chains across the membrane. This Psychrobacter sp. (strain PRwf-1) protein is Protein translocase subunit SecA.